A 240-amino-acid chain; its full sequence is Ubiquinone biosynthesis O-methyltransferase (240 aa).

Residues Arg44, Gly64, Asp85, and Met129 each contribute to the S-adenosyl-L-methionine site.

This sequence belongs to the methyltransferase superfamily. UbiG/COQ3 family.

It catalyses the reaction a 3-demethylubiquinol + S-adenosyl-L-methionine = a ubiquinol + S-adenosyl-L-homocysteine + H(+). The enzyme catalyses a 3-(all-trans-polyprenyl)benzene-1,2-diol + S-adenosyl-L-methionine = a 2-methoxy-6-(all-trans-polyprenyl)phenol + S-adenosyl-L-homocysteine + H(+). The protein operates within cofactor biosynthesis; ubiquinone biosynthesis. In terms of biological role, O-methyltransferase that catalyzes the 2 O-methylation steps in the ubiquinone biosynthetic pathway. The polypeptide is Ubiquinone biosynthesis O-methyltransferase (Escherichia coli (strain ATCC 8739 / DSM 1576 / NBRC 3972 / NCIMB 8545 / WDCM 00012 / Crooks)).